A 158-amino-acid polypeptide reads, in one-letter code: 2-C-methyl-D-erythritol 2,4-cyclodiphosphate synthase (158 aa).

A divalent metal cation is bound by residues D9 and H11. Residues 9-11 and 35-36 each bind 4-CDP-2-C-methyl-D-erythritol 2-phosphate; these read DVH and HS. H43 provides a ligand contact to a divalent metal cation. Residues 57–59, 62–66, 101–107, 133–136, F140, and R143 contribute to the 4-CDP-2-C-methyl-D-erythritol 2-phosphate site; these read DIG, FPDTD, AQKPKMA, and TTTE.

The protein belongs to the IspF family. As to quaternary structure, homotrimer. A divalent metal cation serves as cofactor.

The catalysed reaction is 4-CDP-2-C-methyl-D-erythritol 2-phosphate = 2-C-methyl-D-erythritol 2,4-cyclic diphosphate + CMP. The protein operates within isoprenoid biosynthesis; isopentenyl diphosphate biosynthesis via DXP pathway; isopentenyl diphosphate from 1-deoxy-D-xylulose 5-phosphate: step 4/6. Functionally, involved in the biosynthesis of isopentenyl diphosphate (IPP) and dimethylallyl diphosphate (DMAPP), two major building blocks of isoprenoid compounds. Catalyzes the conversion of 4-diphosphocytidyl-2-C-methyl-D-erythritol 2-phosphate (CDP-ME2P) to 2-C-methyl-D-erythritol 2,4-cyclodiphosphate (ME-CPP) with a corresponding release of cytidine 5-monophosphate (CMP). This chain is 2-C-methyl-D-erythritol 2,4-cyclodiphosphate synthase, found in Bacillus cereus (strain B4264).